The sequence spans 767 residues: Start control protein cdc10 (767 aa).

A disordered region spans residues 17–44 (FSYQKRPEDEPSQPLSNRNINKLNDSST). Over residues 29–44 (QPLSNRNINKLNDSST) the composition is skewed to polar residues. Positions 66–173 (ELYAVECSGM…FNLDLFPKFS (108 aa)) constitute an HTH APSES-type domain. Positions 98–119 (ISQILRLAGTSSSENAKELDDI) form a DNA-binding region, H-T-H motif. Positions 189 to 230 (TSSFNTRSPLRNHNFSNPSKSSKNGVHTINNMQSSPSPSSSF) are disordered. Positions 192 to 221 (FNTRSPLRNHNFSNPSKSSKNGVHTINNMQ) are enriched in polar residues. S252 bears the Phosphoserine mark. The Nuclear localization signal signature appears at 261–264 (KRHR). ANK repeat units follow at residues 356–385 (LGHA…NPLR) and 483–512 (NGDT…SAYI). The segment at 542–562 (VSLMSENLSSKEKTAVPPRQK) is disordered.

DSC1 contains cdc10 and sct1/res1. Interacts with pol5.

The protein localises to the nucleus. Its function is as follows. Major component of the cell cycle transcription factor complex MBF (MCB binding factor, also known as DSC1), that controls G1-S phase specific gene expression. Involved in the control of rRNA production, via interaction with pol5. May be involved in the transcriptional regulation of the cdc22 and cdt1 genes. In fission yeast, two genes, cdc10 and cdc2, are required for the cell cycle control called start, the point early in the G1 phase at which cells become committed to the mitotic cycle. This chain is Start control protein cdc10 (cdc10), found in Schizosaccharomyces pombe (strain 972 / ATCC 24843) (Fission yeast).